The chain runs to 153 residues: Deoxyuridine 5'-triphosphate nucleotidohydrolase (153 aa).

Residues Ser-75, Gly-88, Asp-91, Tyr-94, Lys-99, Arg-143, Phe-148, and Gly-149 each contribute to the dUMP site.

The protein belongs to the dUTPase family. As to quaternary structure, homotrimer. Mg(2+) is required as a cofactor.

The catalysed reaction is dUTP + H2O = dUMP + diphosphate + H(+). Its pathway is pyrimidine metabolism; dUMP biosynthesis; dUMP from dCTP (dUTP route): step 2/2. Involved in nucleotide metabolism via production of dUMP, the immediate precursor of thymidine nucleotides, and decreases the intracellular concentration of dUTP so that uracil cannot be incorporated into DNA. This chain is Deoxyuridine 5'-triphosphate nucleotidohydrolase (DUT1), found in Eremothecium gossypii (strain ATCC 10895 / CBS 109.51 / FGSC 9923 / NRRL Y-1056) (Yeast).